A 121-amino-acid chain; its full sequence is Pro-glucagon (121 aa).

The N-terminal stretch at M1 to C21 is a signal peptide. A propeptide spanning residues S80–A85 is cleaved from the precursor.

It belongs to the glucagon family.

The protein localises to the secreted. Its function is as follows. Plays a key role in glucose metabolism and homeostasis. Regulates blood glucose by increasing gluconeogenesis and decreasing glycolysis. This is Pro-glucagon (gcg) from Carassius auratus (Goldfish).